A 254-amino-acid chain; its full sequence is Imidazole glycerol phosphate synthase subunit HisF (254 aa).

Catalysis depends on residues Asp11 and Asp130.

Belongs to the HisA/HisF family. In terms of assembly, heterodimer of HisH and HisF.

Its subcellular location is the cytoplasm. It catalyses the reaction 5-[(5-phospho-1-deoxy-D-ribulos-1-ylimino)methylamino]-1-(5-phospho-beta-D-ribosyl)imidazole-4-carboxamide + L-glutamine = D-erythro-1-(imidazol-4-yl)glycerol 3-phosphate + 5-amino-1-(5-phospho-beta-D-ribosyl)imidazole-4-carboxamide + L-glutamate + H(+). Its pathway is amino-acid biosynthesis; L-histidine biosynthesis; L-histidine from 5-phospho-alpha-D-ribose 1-diphosphate: step 5/9. Functionally, IGPS catalyzes the conversion of PRFAR and glutamine to IGP, AICAR and glutamate. The HisF subunit catalyzes the cyclization activity that produces IGP and AICAR from PRFAR using the ammonia provided by the HisH subunit. This Staphylococcus carnosus (strain TM300) protein is Imidazole glycerol phosphate synthase subunit HisF.